We begin with the raw amino-acid sequence, 365 residues long: Phospho-N-acetylmuramoyl-pentapeptide-transferase (365 aa).

Helical transmembrane passes span 22-42 (YISV…LALG), 74-94 (TMGG…WGDL), 95-115 (TSIY…IGFF), 133-153 (YKFA…FYLL), 168-188 (SLYI…IING), 201-221 (GLAI…AYIE), 240-260 (LAEV…FLWF), 267-287 (VFMG…IAVM), 292-312 (LIFF…MLQV), and 342-362 (KVVI…LAAI).

It belongs to the glycosyltransferase 4 family. MraY subfamily. Requires Mg(2+) as cofactor.

It is found in the cell inner membrane. It carries out the reaction UDP-N-acetyl-alpha-D-muramoyl-L-alanyl-gamma-D-glutamyl-meso-2,6-diaminopimeloyl-D-alanyl-D-alanine + di-trans,octa-cis-undecaprenyl phosphate = di-trans,octa-cis-undecaprenyl diphospho-N-acetyl-alpha-D-muramoyl-L-alanyl-D-glutamyl-meso-2,6-diaminopimeloyl-D-alanyl-D-alanine + UMP. It participates in cell wall biogenesis; peptidoglycan biosynthesis. In terms of biological role, catalyzes the initial step of the lipid cycle reactions in the biosynthesis of the cell wall peptidoglycan: transfers peptidoglycan precursor phospho-MurNAc-pentapeptide from UDP-MurNAc-pentapeptide onto the lipid carrier undecaprenyl phosphate, yielding undecaprenyl-pyrophosphoryl-MurNAc-pentapeptide, known as lipid I. The protein is Phospho-N-acetylmuramoyl-pentapeptide-transferase of Francisella tularensis subsp. tularensis (strain FSC 198).